A 169-amino-acid chain; its full sequence is Shikimate kinase (169 aa).

13-18 lines the ATP pocket; that stretch reads GAGKST. Ser17 lines the Mg(2+) pocket. Residues Asp35, Arg59, and Gly80 each coordinate substrate. Arg117 lines the ATP pocket. Arg136 is a binding site for substrate. Residue Arg153 participates in ATP binding.

The protein belongs to the shikimate kinase family. Monomer. Mg(2+) is required as a cofactor.

The protein localises to the cytoplasm. The enzyme catalyses shikimate + ATP = 3-phosphoshikimate + ADP + H(+). Its pathway is metabolic intermediate biosynthesis; chorismate biosynthesis; chorismate from D-erythrose 4-phosphate and phosphoenolpyruvate: step 5/7. Catalyzes the specific phosphorylation of the 3-hydroxyl group of shikimic acid using ATP as a cosubstrate. The chain is Shikimate kinase from Corynebacterium efficiens (strain DSM 44549 / YS-314 / AJ 12310 / JCM 11189 / NBRC 100395).